The chain runs to 238 residues: MGLYDRDYTQDSRLPGTFSSRVYGWMTAGLAVTALTSLGLYATGAYRTLFSLWWVWCFATLGVSFYIQAQIQKLSVPAVMGLFLAYSVLEGMFFGTMVPVYAAQFGGGIVWAAFGSAAVIFGLSAAYGAFTKSDLTQIHRILMLALIGLMVISLGFLVVSLFTPMPLMYLLICYLGLIIFVGLTVVDAQSIRRVARSVGDHGDLSYKLSLIMALQMYCNVIMIFWYLLQIFASSDKRR.

A run of 7 helical transmembrane segments spans residues 22–42 (VYGW…GLYA), 49–69 (LFSL…YIQA), 78–98 (AVMG…GTMV), 105–125 (FGGG…GLSA), 141–161 (ILML…VVSL), 166–186 (PLMY…LTVV), and 208–228 (LSLI…WYLL).

The protein belongs to the BI1 family.

The protein resides in the cell membrane. This is an uncharacterized protein from Chlamydia muridarum (strain MoPn / Nigg).